The following is a 231-amino-acid chain: Large ribosomal subunit protein uL1 (231 aa).

Belongs to the universal ribosomal protein uL1 family. Part of the 50S ribosomal subunit.

Binds directly to 23S rRNA. The L1 stalk is quite mobile in the ribosome, and is involved in E site tRNA release. Functionally, protein L1 is also a translational repressor protein, it controls the translation of the L11 operon by binding to its mRNA. The protein is Large ribosomal subunit protein uL1 of Francisella tularensis subsp. tularensis (strain FSC 198).